A 138-amino-acid polypeptide reads, in one-letter code: Large ribosomal subunit protein uL16c (138 aa).

Belongs to the universal ribosomal protein uL16 family. As to quaternary structure, part of the 50S ribosomal subunit.

It localises to the plastid. It is found in the chloroplast. The polypeptide is Large ribosomal subunit protein uL16c (Emiliania huxleyi (Coccolithophore)).